We begin with the raw amino-acid sequence, 363 residues long: MSGNTYGKLFTVTTAGESHGPALVAIVDGCPPGLEISLEDLQRDLDRRKPGTSRHTTQRQEADEVEILSGVFEGRTTGCSIGLLIRNTDQKSKDYSAIKDLFRPAHADYTYHHKYGERDYRGGGRSSARETAMRVAAGAIAKKYLASQGIVIRGYMSQLGPIEIPFKTWESVEQNAFFSPDPDKVPELEAYMDQLRRDQDSVGAKITVVAEGVMPGLGEPIFDRLDAELAHALMSINAVKGVEIGAGFACVAQRGTEHRDELTPEGFLSNNAGGILGGISSGQPIVAHLALKPTSSITTPGRSIDIDGNPVDVITKGRHDPCVGIRATPIAEAMMAIVLMDHLLRHRGQNADVRVSTPVLGQL.

NADP(+) contacts are provided by Arg-48 and Arg-54. FMN is bound by residues 125–127 (RSS), 237–238 (NA), Gly-277, 292–296 (KPTSS), and Arg-318.

Belongs to the chorismate synthase family. In terms of assembly, homotetramer. It depends on FMNH2 as a cofactor.

The catalysed reaction is 5-O-(1-carboxyvinyl)-3-phosphoshikimate = chorismate + phosphate. Its pathway is metabolic intermediate biosynthesis; chorismate biosynthesis; chorismate from D-erythrose 4-phosphate and phosphoenolpyruvate: step 7/7. In terms of biological role, catalyzes the anti-1,4-elimination of the C-3 phosphate and the C-6 proR hydrogen from 5-enolpyruvylshikimate-3-phosphate (EPSP) to yield chorismate, which is the branch point compound that serves as the starting substrate for the three terminal pathways of aromatic amino acid biosynthesis. This reaction introduces a second double bond into the aromatic ring system. The sequence is that of Chorismate synthase from Pseudomonas fluorescens (strain Pf0-1).